Here is a 272-residue protein sequence, read N- to C-terminus: Putative phosphoenolpyruvate synthase regulatory protein (272 aa).

G152 to T159 lines the ADP pocket.

This sequence belongs to the pyruvate, phosphate/water dikinase regulatory protein family. PSRP subfamily.

The enzyme catalyses [pyruvate, water dikinase] + ADP = [pyruvate, water dikinase]-phosphate + AMP + H(+). It carries out the reaction [pyruvate, water dikinase]-phosphate + phosphate + H(+) = [pyruvate, water dikinase] + diphosphate. Bifunctional serine/threonine kinase and phosphorylase involved in the regulation of the phosphoenolpyruvate synthase (PEPS) by catalyzing its phosphorylation/dephosphorylation. This chain is Putative phosphoenolpyruvate synthase regulatory protein, found in Pseudomonas putida (strain ATCC 47054 / DSM 6125 / CFBP 8728 / NCIMB 11950 / KT2440).